We begin with the raw amino-acid sequence, 722 residues long: D-galactosyl-beta-1-&gt;4-L-rhamnose phosphorylase (722 aa).

Residue D319 is the Proton donor of the active site.

It belongs to the glycoside hydrolase 112 family.

The catalysed reaction is beta-D-galactosyl-(1-&gt;4)-L-rhamnose + phosphate = alpha-D-galactose 1-phosphate + L-rhamnopyranose. Reversibly phosphorolyzes beta-D-galactosyl-(1-&gt;4)-L-rhamnose to form alpha-D-galactose 1-phosphate and L-rhamnose. Does not phosphorolyze galacto-N-biose or lacto-N-biose. In the reverse reaction, has the highest activity toward L-rhamnose, also has activity toward L-mannose, and low activity toward L-lyxose, D-glucose, 2-deoxy-D-glucose and D-galactose. This is D-galactosyl-beta-1-&gt;4-L-rhamnose phosphorylase from Lachnoclostridium phytofermentans (strain ATCC 700394 / DSM 18823 / ISDg) (Clostridium phytofermentans).